The chain runs to 122 residues: Large ribosomal subunit protein uL14 (122 aa).

Belongs to the universal ribosomal protein uL14 family. In terms of assembly, part of the 50S ribosomal subunit. Forms a cluster with proteins L3 and L19. In the 70S ribosome, L14 and L19 interact and together make contacts with the 16S rRNA in bridges B5 and B8.

Functionally, binds to 23S rRNA. Forms part of two intersubunit bridges in the 70S ribosome. This chain is Large ribosomal subunit protein uL14, found in Buchnera aphidicola subsp. Acyrthosiphon pisum (strain 5A).